Reading from the N-terminus, the 611-residue chain is V-type proton ATPase catalytic subunit A (611 aa).

244 to 251 serves as a coordination point for ATP; the sequence is GAFGCGKT.

The protein belongs to the ATPase alpha/beta chains family. In terms of assembly, V-ATPase is a heteromultimeric enzyme made up of two complexes: the ATP-hydrolytic V1 complex and the proton translocation V0 complex. The V1 complex consists of three catalytic AB heterodimers that form a heterohexamer, three peripheral stalks each consisting of EG heterodimers, one central rotor including subunits D and F, and the regulatory subunits C and H. The proton translocation complex V0 consists of the proton transport subunit a, a ring of proteolipid subunits c9c'', rotary subunit d and subunit e.

It localises to the cell membrane. It is found in the vacuole. The protein localises to the vesicle. It catalyses the reaction ATP + H2O + 4 H(+)(in) = ADP + phosphate + 5 H(+)(out). Its activity is regulated as follows. ATP hydrolysis occurs at the interface between the nucleotide-binding domains of subunits A and B. ATP hydrolysis triggers a conformational change in the subunits D and F, which induces a shift of subunit d. The c-ring is subsequently rotated and results in a continuous proton translocation across the membrane. Functionally, catalytic subunit of the V1 complex of vacuolar(H+)-ATPase (V-ATPase), a multisubunit enzyme composed of a peripheral complex (V1) that hydrolyzes ATP and a membrane integral complex (V0) that translocates protons. V-ATPase is responsible for acidifying and maintaining the pH of intracellular compartments and in some cell types, is targeted to the plasma membrane, where it is responsible for acidifying the extracellular environment. During the trophozoite stage, involved in the acidification of the extracellular space next to the cell membrane. The sequence is that of V-type proton ATPase catalytic subunit A from Plasmodium falciparum (isolate 3D7).